The following is a 112-amino-acid chain: Large ribosomal subunit protein uL24 (112 aa).

This sequence belongs to the universal ribosomal protein uL24 family. In terms of assembly, part of the 50S ribosomal subunit.

In terms of biological role, one of two assembly initiator proteins, it binds directly to the 5'-end of the 23S rRNA, where it nucleates assembly of the 50S subunit. One of the proteins that surrounds the polypeptide exit tunnel on the outside of the subunit. The protein is Large ribosomal subunit protein uL24 of Magnetococcus marinus (strain ATCC BAA-1437 / JCM 17883 / MC-1).